The following is a 123-amino-acid chain: Small ribosomal subunit protein uS13c (123 aa).

Residues 89–123 form a disordered region; it reads RGKRHRNNLPVRGQRTRTNARSRRGSKKTVTGKKK. A compositionally biased stretch (basic residues) spans 102 to 123; the sequence is QRTRTNARSRRGSKKTVTGKKK.

This sequence belongs to the universal ribosomal protein uS13 family. As to quaternary structure, part of the 30S ribosomal subunit.

The protein localises to the plastid. It is found in the chloroplast. In terms of biological role, located at the top of the head of the 30S subunit, it contacts several helices of the 16S rRNA. The protein is Small ribosomal subunit protein uS13c of Phaeodactylum tricornutum (strain CCAP 1055/1).